The chain runs to 41 residues: Large ribosomal subunit protein bL36 (41 aa).

Belongs to the bacterial ribosomal protein bL36 family.

This is Large ribosomal subunit protein bL36 from Neisseria gonorrhoeae (strain ATCC 700825 / FA 1090).